Reading from the N-terminus, the 396-residue chain is ATP synthase subunit beta, chloroplastic (396 aa).

ATP is bound at residue 74–81; that stretch reads GGAGVGKT.

It belongs to the ATPase alpha/beta chains family. F-type ATPases have 2 components, CF(1) - the catalytic core - and CF(0) - the membrane proton channel. CF(1) has five subunits: alpha(3), beta(3), gamma(1), delta(1), epsilon(1). CF(0) has four main subunits: a(1), b(1), b'(1) and c(9-12).

Its subcellular location is the plastid. The protein resides in the chloroplast thylakoid membrane. The catalysed reaction is ATP + H2O + 4 H(+)(in) = ADP + phosphate + 5 H(+)(out). Produces ATP from ADP in the presence of a proton gradient across the membrane. The catalytic sites are hosted primarily by the beta subunits. The polypeptide is ATP synthase subunit beta, chloroplastic (Adiantum raddianum (Maidenhair fern)).